Reading from the N-terminus, the 243-residue chain is Ubiquinone biosynthesis O-methyltransferase (243 aa).

S-adenosyl-L-methionine is bound by residues arginine 45, glycine 65, aspartate 86, and leucine 130.

It belongs to the methyltransferase superfamily. UbiG/COQ3 family.

The enzyme catalyses a 3-demethylubiquinol + S-adenosyl-L-methionine = a ubiquinol + S-adenosyl-L-homocysteine + H(+). The catalysed reaction is a 3-(all-trans-polyprenyl)benzene-1,2-diol + S-adenosyl-L-methionine = a 2-methoxy-6-(all-trans-polyprenyl)phenol + S-adenosyl-L-homocysteine + H(+). The protein operates within cofactor biosynthesis; ubiquinone biosynthesis. Functionally, O-methyltransferase that catalyzes the 2 O-methylation steps in the ubiquinone biosynthetic pathway. This chain is Ubiquinone biosynthesis O-methyltransferase, found in Idiomarina loihiensis (strain ATCC BAA-735 / DSM 15497 / L2-TR).